Reading from the N-terminus, the 395-residue chain is MALHLLLLFGACWVQVASPDSLQRTTMLPSTPHITAPSTSEAQNASPSVSVGSGTVDSKETISPWGQTTIPVSLTPLETTELSSLETSAGASMSTPVPEPTASQEVSSKTSALLPEPSNVASDPPVTAANPVTDGPAANPVTDGTAASTSISKGTSAPPTTVTTSSNETSGPSVATTVSSKTSGPPVTTATGSLGPSSEMHGLPATTATSSVESSSVARGTSVSSRKTSTTSTQDPITTRSPSQESSGMLLVPMLIALVVVLALVALLLLWRQRQKRRTGALTLSGGGKRNGVVDAWAGPARVPDEEATTTSGAGGNKGSEVLETEGSGQRPTLTTFFSRRKSRQGSLVLEELKPGSGPNLKGEEEPLVGSEDEAVETPTSDGPQAKDEAAPQSL.

The first 19 residues, 1–19, serve as a signal peptide directing secretion; sequence MALHLLLLFGACWVQVASP. The Extracellular portion of the chain corresponds to 20-248; the sequence is DSLQRTTMLP…TRSPSQESSG (229 aa). A compositionally biased stretch (polar residues) spans 27-56; that stretch reads MLPSTPHITAPSTSEAQNASPSVSVGSGTV. Positions 27–245 are disordered; the sequence is MLPSTPHITA…PITTRSPSQE (219 aa). Residues 73 to 88 are compositionally biased toward low complexity; sequence SLTPLETTELSSLETS. Polar residues-rich tracts occupy residues 89-111 and 145-154; these read AGASMSTPVPEPTASQEVSSKTS and TAASTSISKG. Over residues 155–166 the composition is skewed to low complexity; sequence TSAPPTTVTTSS. N-linked (GlcNAc...) asparagine glycosylation occurs at Asn167. Residues 167-196 are compositionally biased toward polar residues; sequence NETSGPSVATTVSSKTSGPPVTTATGSLGP. Residues 205 to 241 show a composition bias toward low complexity; that stretch reads ATTATSSVESSSVARGTSVSSRKTSTTSTQDPITTRS. A helical membrane pass occupies residues 249-271; sequence MLLVPMLIALVVVLALVALLLLW. Positions 272 to 302 are required for interaction with EZR, MSN and RDX and for co-localization to microvilli; the sequence is RQRQKRRTGALTLSGGGKRNGVVDAWAGPAR. The Cytoplasmic segment spans residues 272-395; the sequence is RQRQKRRTGA…AKDEAAPQSL (124 aa). The Nuclear localization signal motif lies at 276–290; sequence KRRTGALTLSGGGKR. A phosphoserine mark is found at Ser285 and Ser328. The interval 303 to 395 is disordered; sequence VPDEEATTTS…AKDEAAPQSL (93 aa). Residues 327–338 are compositionally biased toward polar residues; sequence GSGQRPTLTTFF. Position 333 is a phosphothreonine (Thr333). 2 positions are modified to phosphoserine: Ser339 and Ser343. Position 347 is a phosphoserine; by PKC/PRKCQ (Ser347). Ser371 carries the phosphoserine modification. Thr378 is modified (phosphothreonine). Basic and acidic residues predominate over residues 385 to 395; that stretch reads QAKDEAAPQSL.

Interacts with SIGLEC1. As to quaternary structure, interacts with isoform 2 of HIPK2. Interacts with CTNNB1. Interacts with RDX (via FERM domain). Interacts with EZR. Interacts with MSN. In terms of processing, phosphorylation at Ser-347 is regulated by chemokines, requires its association with ERM proteins (EZR, RDX and MSN) and is essential for its function in the regulation of T-cell trafficking to lymph nodes. Post-translationally, has a high content of sialic acid and O-linked carbohydrate structures. Cleavage by CTSG releases its extracellular domain and triggers its intramembrane proteolysis by gamma-secretase releasing the CD43 cytoplasmic tail chain (CD43-ct) which translocates to the nucleus. In terms of processing, sumoylated. As to expression, cell surface of thymocytes, T-lymphocytes, neutrophils, plasma cells and myelomas.

It localises to the membrane. The protein resides in the cell projection. It is found in the microvillus. Its subcellular location is the uropodium. The protein localises to the nucleus. It localises to the PML body. Functionally, predominant cell surface sialoprotein of leukocytes which regulates multiple T-cell functions, including T-cell activation, proliferation, differentiation, trafficking and migration. Positively regulates T-cell trafficking to lymph-nodes via its association with ERM proteins (EZR, RDX and MSN). Negatively regulates Th2 cell differentiation and predisposes the differentiation of T-cells towards a Th1 lineage commitment. Promotes the expression of IFN-gamma by T-cells during T-cell receptor (TCR) activation of naive cells and induces the expression of IFN-gamma by CD4(+) T-cells and to a lesser extent by CD8(+) T-cells. Plays a role in preparing T-cells for cytokine sensing and differentiation into effector cells by inducing the expression of cytokine receptors IFNGR and IL4R, promoting IFNGR and IL4R signaling and by mediating the clustering of IFNGR with TCR. Acts as a major E-selectin ligand responsible for Th17 cell rolling on activated vasculature and recruitment during inflammation. Mediates Th17 cells, but not Th1 cells, adhesion to E-selectin. Acts as a T-cell counter-receptor for SIGLEC1. Its function is as follows. Protects cells from apoptotic signals, promoting cell survival. In Mus musculus (Mouse), this protein is Leukosialin (Spn).